Reading from the N-terminus, the 431-residue chain is MATEHEEKLGTEDSKWLGEYSQVHMNVFGTPLRVMDHGQGAHIWDVDGNEYLDFLAGIAVNSLGYAHPKWVKAVADQAAKVAHISNYFASEPQIELASKLVKLAGAPEGSKVYFGNSGAEGNEAALKLAKLYGRTLPGALPSIGGKPARILAMTHGFHGRTMGALSATWKPGIRKPYDPLVPNIEFVRAGDKVALHDAFAQTGLGRYGKGPVAAVILELIQGEAGVQPLGADYVKFVRELCDINHALLIIDEVQTGIGRTGKWFAFQRDDLSGGVTPDMVTFAKGVAGGFPMGGMIAFGEKLAALFTPGSHGSTFAGNPLGAAAGLATLDVIEDENLVANAEARGEQLRDGIMATGNPLFVSVRGRGLLDAVELKHPCSHAVMNYCLEHGLIVNAVAPNALRFAPPLIVTAQDVDQALAILKDVPTDLPDD.

Residues 118-119 (GA) and F157 each bind pyridoxal 5'-phosphate. R160 contacts N(2)-acetyl-L-ornithine. Pyridoxal 5'-phosphate is bound at residue 251 to 254 (DEVQ). An N6-(pyridoxal phosphate)lysine modification is found at K284. S313 is a N(2)-acetyl-L-ornithine binding site. T314 serves as a coordination point for pyridoxal 5'-phosphate.

Belongs to the class-III pyridoxal-phosphate-dependent aminotransferase family. ArgD subfamily. As to quaternary structure, homodimer. Pyridoxal 5'-phosphate is required as a cofactor.

The protein resides in the cytoplasm. The catalysed reaction is N(2)-acetyl-L-ornithine + 2-oxoglutarate = N-acetyl-L-glutamate 5-semialdehyde + L-glutamate. It participates in amino-acid biosynthesis; L-arginine biosynthesis; N(2)-acetyl-L-ornithine from L-glutamate: step 4/4. In Bifidobacterium longum (strain NCC 2705), this protein is Acetylornithine aminotransferase.